The primary structure comprises 234 residues: Phosphoglycolate phosphatase (234 aa).

The active-site Nucleophile is the aspartate 8. Mg(2+) contacts are provided by aspartate 8 and aspartate 10. Lysine 157 is a substrate binding site. The Mg(2+) site is built by aspartate 180 and aspartate 184.

This sequence belongs to the archaeal SPP-like hydrolase family. Mg(2+) serves as cofactor.

The catalysed reaction is 2-phosphoglycolate + H2O = glycolate + phosphate. Its function is as follows. Catalyzes the dephosphorylation of 2-phosphoglycolate. This chain is Phosphoglycolate phosphatase, found in Methanoculleus marisnigri (strain ATCC 35101 / DSM 1498 / JR1).